The primary structure comprises 811 residues: TLR4 interactor with leucine rich repeats (811 aa).

The N-terminal stretch at 1–25 is a signal peptide; sequence MEGVGAVRFWLVVCGCLAFPPRAES. The 32-residue stretch at 26-57 folds into the LRRNT domain; the sequence is VCPERCDCQHPQHLLCTNRGLRAVPKTSSLPS. At 26-696 the chain is on the extracellular side; it reads VCPERCDCQH…AGGRGGVDYQ (671 aa). LRR repeat units lie at residues 61-81, 84-105, 108-129, 132-153, 156-177, 180-201, 204-223, 230-251, 254-275, 278-298, 302-323, and 326-347; these read VLTY…DFHR, QLRR…TFEK, RLEE…TLAP, KLRI…SFEG, SLVK…VFAP, NLLY…AFTQ, KLRF…RHAA, SLST…VFQH, RLGL…AFWG, ALRE…TLLE, SLEA…TFGH, and RLRE…IFAA. N-linked (GlcNAc...) asparagine glycosylation is present at Asn73. An LRRCT domain is found at 359–416; it reads NGWTCDCRLRGLKRWMGNWHSQGRLLTVFVQCRHPPALRGKYLDYLDDQLLQNGSCVD. Residue Asn411 is glycosylated (N-linked (GlcNAc...) asparagine). 2 disordered regions span residues 414–460 and 486–562; these read CVDP…QQRG and RRGP…QQGR. Over residues 421–430 the composition is skewed to polar residues; that stretch reads PTAGSRQWPI. Composition is skewed to low complexity over residues 440–460 and 494–508; these read PPAG…QQRG and QSPS…APQS. The segment covering 510–519 has biased composition (basic and acidic residues); sequence DLHEKPERGR. Over residues 524 to 545 the composition is skewed to polar residues; it reads NLPQTEPTPTSEPASGTPSARD. Asn589 is a glycosylation site (N-linked (GlcNAc...) asparagine). A helical membrane pass occupies residues 697 to 717; that stretch reads LLTLVLLAINALLVLLALAAW. Residues 718–809 lie on the Cytoplasmic side of the membrane; it reads GSRWLRRKLR…RREDHLLQRF (92 aa). Ser798 carries the phosphoserine modification.

In terms of assembly, belongs to the lipopolysaccharide (LPS) receptor, a multi-protein complex containing at least CD14, MD-2 and TLR4. Interacts with TLR4; this interaction is greatly enhanced following LPS stimulation. Interacts with LPS. N-glycolysaled. In terms of tissue distribution, highly expressed in cortical astrocytes and in cerebellar granule neurons.

The protein resides in the membrane. Its function is as follows. Component of the TLR4 signaling complex. Mediates the innate immune response to bacterial lipopolysaccharide (LPS) leading to cytokine secretion and the inflammatory response. The polypeptide is TLR4 interactor with leucine rich repeats (Tril) (Rattus norvegicus (Rat)).